The following is a 1372-amino-acid chain: DNA-directed RNA polymerase subunit beta (1372 aa).

The protein belongs to the RNA polymerase beta chain family. As to quaternary structure, the RNAP catalytic core consists of 2 alpha, 1 beta, 1 beta' and 1 omega subunit. When a sigma factor is associated with the core the holoenzyme is formed, which can initiate transcription.

The enzyme catalyses RNA(n) + a ribonucleoside 5'-triphosphate = RNA(n+1) + diphosphate. In terms of biological role, DNA-dependent RNA polymerase catalyzes the transcription of DNA into RNA using the four ribonucleoside triphosphates as substrates. This chain is DNA-directed RNA polymerase subunit beta, found in Rickettsia bellii (strain OSU 85-389).